The sequence spans 460 residues: Probable Xaa-Pro aminopeptidase VDBG_02538 (460 aa).

Positions 256, 267, 390, and 430 each coordinate Mn(2+).

Belongs to the peptidase M24B family. It depends on Mn(2+) as a cofactor.

It catalyses the reaction Release of any N-terminal amino acid, including proline, that is linked to proline, even from a dipeptide or tripeptide.. Its function is as follows. Catalyzes the removal of a penultimate prolyl residue from the N-termini of peptides. This chain is Probable Xaa-Pro aminopeptidase VDBG_02538, found in Verticillium alfalfae (strain VaMs.102 / ATCC MYA-4576 / FGSC 10136) (Verticillium wilt of alfalfa).